A 402-amino-acid chain; its full sequence is MPTGTVARAWVLVLALWGAVAGGQNITARIGEPLMLSCKGAPKKPTQKLEWKLNTGRTEAWKVLSPQGDPWDSVARILPNGSLLLPAIGIVDEGTFRCRATNRLGKEVKSNYRVRVYQIPGKPEIVNPASELTANVPNKVGTCVSEGSYPAGTLSWHLDGKPLIPDGKGTVVKEETRRHPETGLFTLRSELTVTPAQGGTTPTYSCSFSLGLPRRRPLNTAPIQPRVREPLPPEGIQLLVEPEGGTVAPGGTVTLTCAISAQPPPQIHWIKDGTPLPLAPSPVLLLPEVGHEDEGIYSCVATHPSHGPQESPPVNIRVTETGDEGQAAGSVDGSGLGTLALALGILGGLGIAALLIGAILWRKRQPRLEERKAPESQEDEEERAELNQSEEAEMPENGAGGP.

The first 22 residues, 1-22, serve as a signal peptide directing secretion; that stretch reads MPTGTVARAWVLVLALWGAVAG. Residues 23–109 enclose the Ig-like V-type domain; sequence GQNITARIGE…ATNRLGKEVK (87 aa). Residues 23 to 341 are Extracellular-facing; sequence GQNITARIGE…DGSGLGTLAL (319 aa). Residues Asn-25 and Asn-80 are each glycosylated (N-linked (GlcNAc...) asparagine). 2 disulfide bridges follow: Cys-38–Cys-98 and Cys-143–Cys-206. Ig-like C2-type domains follow at residues 123–219 and 233–315; these read PEIV…RPLN and PEGI…PPVN. A helical membrane pass occupies residues 342-362; the sequence is ALGILGGLGIAALLIGAILWR. Over 363 to 402 the chain is Cytoplasmic; it reads KRQPRLEERKAPESQEDEEERAELNQSEEAEMPENGAGGP. Residues 368 to 402 form a disordered region; sequence LEERKAPESQEDEEERAELNQSEEAEMPENGAGGP. Phosphoserine occurs at positions 376 and 389. Positions 376 to 394 are enriched in acidic residues; that stretch reads SQEDEEERAELNQSEEAEM.

Constitutive homodimer; disulfide-linked. Forms homooligomers. Interacts with S100A1 and APP. Interacts with S100B, S100A12 and S100A14. Interacts with TIRAP. Interacts with HMGB1. Interacts with LGP2; this interaction plays an important role in AGER-mediated pro-inflammatory responses and cytokine release. Interacts with double-strand break repair protein MRE11 which is a core component of the MRN complex; the interaction enhances MRE11 endonuclease activity and promotes DNA repair. Interacts with the MCM2-7 complex via interaction with complex member MCM2; the interaction is increased following DNA replication stress and stabilizes the MCM2-7 complex at replication forks. Post-translationally, phosphorylated on its cytoplasmic domain by PKCzeta/PRKCZ upon ligand binding. Phosphorylated by ATM following DNA damage. Targeted by the ubiquitin E3 ligase subunit FBXO10 to mediate its ubiquitination and degradation. As to expression, endothelial cells and cardiomyocytes. Expressed in brain.

The protein localises to the cell membrane. The protein resides in the cell projection. It localises to the phagocytic cup. Its subcellular location is the early endosome. It is found in the nucleus. Its function is as follows. Cell surface pattern recognition receptor that senses endogenous stress signals with a broad ligand repertoire including advanced glycation end products, S100 proteins, high-mobility group box 1 protein/HMGB1, amyloid beta/APP oligomers, nucleic acids, histones, phospholipids and glycosaminoglycans. Advanced glycosylation end products are nonenzymatically glycosylated proteins which accumulate in vascular tissue in aging and at an accelerated rate in diabetes. These ligands accumulate at inflammatory sites during the pathogenesis of various diseases including diabetes, vascular complications, neurodegenerative disorders and cancers, and RAGE transduces their binding into pro-inflammatory responses. Upon ligand binding, uses TIRAP and MYD88 as adapters to transduce the signal ultimately leading to the induction of inflammatory cytokines IL6, IL8 and TNFalpha through activation of NF-kappa-B. Interaction with S100A12 on endothelium, mononuclear phagocytes, and lymphocytes triggers cellular activation, with generation of key pro-inflammatory mediators. Interaction with S100B after myocardial infarction may play a role in myocyte apoptosis by activating ERK1/2 and p53/TP53 signaling. Contributes to the translocation of amyloid-beta peptide (ABPP) across the cell membrane from the extracellular to the intracellular space in cortical neurons. ABPP-initiated RAGE signaling, especially stimulation of p38 mitogen-activated protein kinase (MAPK), has the capacity to drive a transport system delivering ABPP as a complex with RAGE to the intraneuronal space. Participates in endothelial albumin transcytosis together with HMGB1 through the RAGE/SRC/Caveolin-1 pathway, leading to endothelial hyperpermeability. Mediates the loading of HMGB1 in extracellular vesicles (EVs) that shuttle HMGB1 to hepatocytes by transferrin-mediated endocytosis and subsequently promote hepatocyte pyroptosis by activating the NLRP3 inflammasome. Binds to DNA and promotes extracellular hypomethylated DNA (CpG DNA) uptake by cells via the endosomal route to activate inflammatory responses. Mediates phagocytosis by non-professional phagocytes (NPP) and this is enhanced by binding to ligands including RNA, DNA, HMGB1 and histones. Promotes NPP-mediated phagocytosis of Saccharomyces cerevisiae spores by binding to RNA attached to the spore wall. Also promotes NPP-mediated phagocytosis of apoptotic cells. Following DNA damage, recruited to DNA double-strand break sites where it colocalizes with the MRN repair complex via interaction with double-strand break repair protein MRE11. Enhances the endonuclease activity of MRE11, promoting the end resection of damaged DNA. Promotes DNA damage repair in trophoblasts which enhances trophoblast invasion and contributes to placental development and maintenance. Protects cells from DNA replication stress by localizing to damaged replication forks where it stabilizes the MCM2-7 complex and promotes faithful progression of the replication fork. This is Advanced glycosylation end product-specific receptor (Ager) from Rattus norvegicus (Rat).